The chain runs to 434 residues: Adenylosuccinate synthetase (434 aa).

GTP is bound by residues 25–31 and 53–55; these read GDEGKGK and GHT. The active-site Proton acceptor is Asp-26. Residues Asp-26 and Gly-53 each coordinate Mg(2+). Residues 26 to 29, 51 to 54, Thr-142, Arg-156, Asn-233, Thr-248, and Arg-312 contribute to the IMP site; these read DEGK and NAGH. His-54 serves as the catalytic Proton donor. Position 308–314 (308–314) interacts with substrate; the sequence is VTTGRKR. GTP is bound by residues Arg-314, 340–342, and 422–424; these read KLD and GVG.

Belongs to the adenylosuccinate synthetase family. In terms of assembly, homodimer. It depends on Mg(2+) as a cofactor.

It is found in the cytoplasm. It carries out the reaction IMP + L-aspartate + GTP = N(6)-(1,2-dicarboxyethyl)-AMP + GDP + phosphate + 2 H(+). The protein operates within purine metabolism; AMP biosynthesis via de novo pathway; AMP from IMP: step 1/2. Its activity is regulated as follows. Competitively Inhibited by GMP. Allosterically inhibited by AMP. In terms of biological role, plays an important role in the de novo pathway and in the salvage pathway of purine nucleotide biosynthesis. Catalyzes the first committed step in the biosynthesis of AMP from IMP. This Schizosaccharomyces pombe (strain 972 / ATCC 24843) (Fission yeast) protein is Adenylosuccinate synthetase (ade2).